Consider the following 308-residue polypeptide: Homoserine O-acetyltransferase (308 aa).

Cys142 functions as the Acyl-thioester intermediate in the catalytic mechanism. Positions 163 and 192 each coordinate substrate. The active-site Proton acceptor is His235. Glu237 is a catalytic residue. A substrate-binding site is contributed by Arg249.

It belongs to the MetA family.

The protein resides in the cytoplasm. The catalysed reaction is L-homoserine + acetyl-CoA = O-acetyl-L-homoserine + CoA. It functions in the pathway amino-acid biosynthesis; L-methionine biosynthesis via de novo pathway; O-acetyl-L-homoserine from L-homoserine: step 1/1. Functionally, transfers an acetyl group from acetyl-CoA to L-homoserine, forming acetyl-L-homoserine. In Agrobacterium fabrum (strain C58 / ATCC 33970) (Agrobacterium tumefaciens (strain C58)), this protein is Homoserine O-acetyltransferase.